The primary structure comprises 211 residues: 7-carboxy-7-deazaguanine synthase (211 aa).

Substrate contacts are provided by residues 22–24 (LQG) and R37. The Radical SAM core domain occupies 28–211 (NTGMPSVFVR…LQTHKLIGIE (184 aa)). Positions 41, 45, and 48 each coordinate [4Fe-4S] cluster. Residue T50 coordinates Mg(2+). A substrate-binding site is contributed by T78. Residues G80 and 122–124 (SPK) each bind S-adenosyl-L-methionine.

It belongs to the radical SAM superfamily. 7-carboxy-7-deazaguanine synthase family. As to quaternary structure, homodimer. [4Fe-4S] cluster is required as a cofactor. S-adenosyl-L-methionine serves as cofactor. The cofactor is Mg(2+).

The enzyme catalyses 6-carboxy-5,6,7,8-tetrahydropterin + H(+) = 7-carboxy-7-deazaguanine + NH4(+). It functions in the pathway purine metabolism; 7-cyano-7-deazaguanine biosynthesis. In terms of biological role, catalyzes the complex heterocyclic radical-mediated conversion of 6-carboxy-5,6,7,8-tetrahydropterin (CPH4) to 7-carboxy-7-deazaguanine (CDG), a step common to the biosynthetic pathways of all 7-deazapurine-containing compounds. This is 7-carboxy-7-deazaguanine synthase from Haemophilus influenzae (strain ATCC 51907 / DSM 11121 / KW20 / Rd).